A 164-amino-acid polypeptide reads, in one-letter code: Large ribosomal subunit protein uL10 (164 aa).

This sequence belongs to the universal ribosomal protein uL10 family. In terms of assembly, part of the ribosomal stalk of the 50S ribosomal subunit. The N-terminus interacts with L11 and the large rRNA to form the base of the stalk. The C-terminus forms an elongated spine to which L12 dimers bind in a sequential fashion forming a multimeric L10(L12)X complex.

In terms of biological role, forms part of the ribosomal stalk, playing a central role in the interaction of the ribosome with GTP-bound translation factors. In Helicobacter pylori (strain P12), this protein is Large ribosomal subunit protein uL10.